The chain runs to 176 residues: Large ribosomal subunit protein uL10 (176 aa).

This sequence belongs to the universal ribosomal protein uL10 family. As to quaternary structure, part of the ribosomal stalk of the 50S ribosomal subunit. The N-terminus interacts with L11 and the large rRNA to form the base of the stalk. The C-terminus forms an elongated spine to which L12 dimers bind in a sequential fashion forming a multimeric L10(L12)X complex.

Forms part of the ribosomal stalk, playing a central role in the interaction of the ribosome with GTP-bound translation factors. In Acaryochloris marina (strain MBIC 11017), this protein is Large ribosomal subunit protein uL10.